The primary structure comprises 143 residues: Deoxyuridine 5'-triphosphate nucleotidohydrolase (143 aa).

Substrate is bound by residues 63–65 (RSG), Asn76, 80–82 (TID), and Lys90.

The protein belongs to the dUTPase family. Mg(2+) is required as a cofactor.

It carries out the reaction dUTP + H2O = dUMP + diphosphate + H(+). It functions in the pathway pyrimidine metabolism; dUMP biosynthesis; dUMP from dCTP (dUTP route): step 2/2. This enzyme is involved in nucleotide metabolism: it produces dUMP, the immediate precursor of thymidine nucleotides and it decreases the intracellular concentration of dUTP so that uracil cannot be incorporated into DNA. This Finegoldia magna (strain ATCC 29328 / DSM 20472 / WAL 2508) (Peptostreptococcus magnus) protein is Deoxyuridine 5'-triphosphate nucleotidohydrolase.